The chain runs to 714 residues: Calpain-1 catalytic subunit (714 aa).

Serine 2 is subject to N-acetylserine. In terms of domain architecture, Calpain catalytic spans leucine 55–threonine 354. Glutamine 109 and aspartate 114 together coordinate Ca(2+). Catalysis depends on residues cysteine 115, histidine 272, and asparagine 296. Residues asparagine 316, aspartate 318, and aspartate 323 each contribute to the Ca(2+) site. Threonine 354 carries the phosphothreonine modification. A domain III region spans residues proline 355–aspartate 526. The segment at glutamine 527–glutamate 542 is linker. 4 consecutive EF-hand domains span residues glutamate 541 to lysine 576, phenylalanine 585 to arginine 618, asparagine 615 to lysine 650, and valine 680 to alanine 714. The segment at isoleucine 543–phenylalanine 713 is domain IV. The Ca(2+) site is built by aspartate 598, aspartate 600, asparagine 602, lysine 604, glutamate 609, aspartate 628, aspartate 630, serine 632, serine 634, and glutamate 639.

It belongs to the peptidase C2 family. As to quaternary structure, forms a heterodimer with a small (regulatory) subunit CAPNS1. Ca(2+) is required as a cofactor. Undergoes calcium-induced successive autoproteolytic cleavages that generate a membrane-bound 78 kDa active form and an intracellular 75 kDa active form. Calpastatin reduces with high efficiency the transition from 78 kDa to 75 kDa calpain forms. As to expression, ubiquitous.

The protein localises to the cytoplasm. It localises to the cell membrane. It carries out the reaction Broad endopeptidase specificity.. Its activity is regulated as follows. Activated by micromolar concentrations of calcium and inhibited by calpastatin. Calcium-regulated non-lysosomal thiol-protease which catalyzes limited proteolysis of substrates involved in cytoskeletal remodeling and signal transduction. Proteolytically cleaves CTBP1 at 'Asn-375', 'Gly-387' and 'His-409'. Cleaves and activates caspase-7 (CASP7). This is Calpain-1 catalytic subunit from Homo sapiens (Human).